A 210-amino-acid polypeptide reads, in one-letter code: Pyridoxine/pyridoxamine 5'-phosphate oxidase (210 aa).

Residues 7–10 (RQSY) and Lys-65 contribute to the substrate site. Residues 60–65 (RIVLIK), 75–76 (FT), Arg-81, Lys-82, and Gln-104 each bind FMN. Substrate contacts are provided by Tyr-122, Arg-126, and Ser-130. Residues 139 to 140 (QS) and Trp-182 contribute to the FMN site. 188-190 (RLH) provides a ligand contact to substrate. Arg-192 is an FMN binding site.

Belongs to the pyridoxamine 5'-phosphate oxidase family. As to quaternary structure, homodimer. FMN is required as a cofactor.

It carries out the reaction pyridoxamine 5'-phosphate + O2 + H2O = pyridoxal 5'-phosphate + H2O2 + NH4(+). It catalyses the reaction pyridoxine 5'-phosphate + O2 = pyridoxal 5'-phosphate + H2O2. It functions in the pathway cofactor metabolism; pyridoxal 5'-phosphate salvage; pyridoxal 5'-phosphate from pyridoxamine 5'-phosphate: step 1/1. Its pathway is cofactor metabolism; pyridoxal 5'-phosphate salvage; pyridoxal 5'-phosphate from pyridoxine 5'-phosphate: step 1/1. Its function is as follows. Catalyzes the oxidation of either pyridoxine 5'-phosphate (PNP) or pyridoxamine 5'-phosphate (PMP) into pyridoxal 5'-phosphate (PLP). This Bordetella bronchiseptica (strain ATCC BAA-588 / NCTC 13252 / RB50) (Alcaligenes bronchisepticus) protein is Pyridoxine/pyridoxamine 5'-phosphate oxidase.